Here is a 339-residue protein sequence, read N- to C-terminus: MGEAVEVMFGNGFPEIHKATSPTQTLHSNQQDCHWYEETIDDDLKWSFALNSVLHQGTSEYQDIALLDTKRFGKVLVIDGKMQSAERDEFIYHECLIHPALLFHPNPKTVFIMGGGEGSAAREILKHTTIEKVVMCDIDQEVVDFCRRFLTVNSDAFCNKKLELVIKDAKAELEKREEKFDIIVGDLADPVEGGPCYQLYTKSFYQNILKPKLSPNGIFVTQAGPAGIFTHKEVFTSIYNTMKQVFKYVKAYTAHVPSFADTWGWVMASDHEFDVEVDEMDRRIEERVNGELMYLNAPSFVSAATLNKTISLALEKETEVYSEENARFIHGHGVAYRHI.

The region spanning 33-270 (CHWYEETIDD…DTWGWVMASD (238 aa)) is the PABS domain. S-adenosyl 3-(methylsulfanyl)propylamine-binding positions include Gln62, Glu117, Asp137, and 168 to 169 (DA). Asp186 acts as the Proton acceptor in catalysis.

It belongs to the spermidine/spermine synthase family. Highly expressed in stem internodes and roots. Lower levels in young seedlings before flowering and rosette leaves. Expressed in the vascular tissues. Restricted to procambial and/or provascular cells during primary root development and early leaves development.

The enzyme catalyses S-adenosyl 3-(methylsulfanyl)propylamine + spermidine = thermospermine + S-methyl-5'-thioadenosine + H(+). Its function is as follows. Required for correct xylem specification through regulation of the lifetime of the xylem elements. Prevents premature death of the xylem vessel elements. This Arabidopsis thaliana (Mouse-ear cress) protein is Thermospermine synthase ACAULIS5 (ACL5).